A 631-amino-acid polypeptide reads, in one-letter code: Arginine--tRNA ligase (631 aa).

The short motif at 132–142 (PNIAKPLHVGH) is the 'HIGH' region element.

This sequence belongs to the class-I aminoacyl-tRNA synthetase family.

It localises to the cytoplasm. The catalysed reaction is tRNA(Arg) + L-arginine + ATP = L-arginyl-tRNA(Arg) + AMP + diphosphate. This Halobacterium salinarum (strain ATCC 700922 / JCM 11081 / NRC-1) (Halobacterium halobium) protein is Arginine--tRNA ligase.